Reading from the N-terminus, the 365-residue chain is Tetraacyldisaccharide 4'-kinase (365 aa).

68–75 (VVGGAGKT) contacts ATP.

This sequence belongs to the LpxK family.

It catalyses the reaction a lipid A disaccharide + ATP = a lipid IVA + ADP + H(+). Its pathway is glycolipid biosynthesis; lipid IV(A) biosynthesis; lipid IV(A) from (3R)-3-hydroxytetradecanoyl-[acyl-carrier-protein] and UDP-N-acetyl-alpha-D-glucosamine: step 6/6. Its function is as follows. Transfers the gamma-phosphate of ATP to the 4'-position of a tetraacyldisaccharide 1-phosphate intermediate (termed DS-1-P) to form tetraacyldisaccharide 1,4'-bis-phosphate (lipid IVA). In Chlamydia pneumoniae (Chlamydophila pneumoniae), this protein is Tetraacyldisaccharide 4'-kinase.